A 357-amino-acid polypeptide reads, in one-letter code: MAIQSDSLSSLPDSPRIVAPQPVSPNEESIERALRPKALEEYVGQQRAREQLEIFIAAARKRGEALDHVLLFGPPGLGKTTLAHIIAHEMGVQLRQTSGPVLERPGDLAALLTNLERNDVLFIDEIHRLSPVVEEILYPALEDFQIDILIGEGPAARSVKLDLQPFTLVGATTRAGMLTNPLRDRFGIVSRLEFYNTDELARIVTRSASLLNADITADGAHEVARRSRGTPRIANRLLRRVRDYAQVKAHGVIDQDAAGRALAMLDVDPQGLDVMDRKLLEAIVHKFDGGPVGVDSLAAAIGEERDTIEDVIEPYLIQHGYLQRTPRGRTATLTTWRHLGLNPPAAASGGTGELFSK.

The segment covering 1–15 (MAIQSDSLSSLPDSP) has biased composition (low complexity). Residues 1–30 (MAIQSDSLSSLPDSPRIVAPQPVSPNEESI) are disordered. The segment at 13–195 (DSPRIVAPQP…FGIVSRLEFY (183 aa)) is large ATPase domain (RuvB-L). ATP contacts are provided by residues L34, R35, G76, K79, T80, T81, 142 to 144 (EDF), R185, Y195, and R232. Mg(2+) is bound at residue T80. The interval 196 to 266 (NTDELARIVT…AAGRALAMLD (71 aa)) is small ATPAse domain (RuvB-S). The interval 269 to 357 (PQGLDVMDRK…SGGTGELFSK (89 aa)) is head domain (RuvB-H). The DNA site is built by R305, R324, and R329.

The protein belongs to the RuvB family. In terms of assembly, homohexamer. Forms an RuvA(8)-RuvB(12)-Holliday junction (HJ) complex. HJ DNA is sandwiched between 2 RuvA tetramers; dsDNA enters through RuvA and exits via RuvB. An RuvB hexamer assembles on each DNA strand where it exits the tetramer. Each RuvB hexamer is contacted by two RuvA subunits (via domain III) on 2 adjacent RuvB subunits; this complex drives branch migration. In the full resolvosome a probable DNA-RuvA(4)-RuvB(12)-RuvC(2) complex forms which resolves the HJ.

It is found in the cytoplasm. It carries out the reaction ATP + H2O = ADP + phosphate + H(+). Its function is as follows. The RuvA-RuvB-RuvC complex processes Holliday junction (HJ) DNA during genetic recombination and DNA repair, while the RuvA-RuvB complex plays an important role in the rescue of blocked DNA replication forks via replication fork reversal (RFR). RuvA specifically binds to HJ cruciform DNA, conferring on it an open structure. The RuvB hexamer acts as an ATP-dependent pump, pulling dsDNA into and through the RuvAB complex. RuvB forms 2 homohexamers on either side of HJ DNA bound by 1 or 2 RuvA tetramers; 4 subunits per hexamer contact DNA at a time. Coordinated motions by a converter formed by DNA-disengaged RuvB subunits stimulates ATP hydrolysis and nucleotide exchange. Immobilization of the converter enables RuvB to convert the ATP-contained energy into a lever motion, pulling 2 nucleotides of DNA out of the RuvA tetramer per ATP hydrolyzed, thus driving DNA branch migration. The RuvB motors rotate together with the DNA substrate, which together with the progressing nucleotide cycle form the mechanistic basis for DNA recombination by continuous HJ branch migration. Branch migration allows RuvC to scan DNA until it finds its consensus sequence, where it cleaves and resolves cruciform DNA. In Bordetella parapertussis (strain 12822 / ATCC BAA-587 / NCTC 13253), this protein is Holliday junction branch migration complex subunit RuvB.